The chain runs to 959 residues: Leucine--tRNA ligase (959 aa).

The 'HIGH' region signature appears at 39–49; the sequence is PYVNAYPHLGS. Residues 637–641 carry the 'KMSKS' region motif; the sequence is KMSKS. Lys640 provides a ligand contact to ATP. The disordered stretch occupies residues 933 to 959; sequence TEEDGGSPRRANALPGRPALYAEKRGG.

Belongs to the class-I aminoacyl-tRNA synthetase family.

It is found in the cytoplasm. The catalysed reaction is tRNA(Leu) + L-leucine + ATP = L-leucyl-tRNA(Leu) + AMP + diphosphate. In Aeropyrum pernix (strain ATCC 700893 / DSM 11879 / JCM 9820 / NBRC 100138 / K1), this protein is Leucine--tRNA ligase.